Consider the following 284-residue polypeptide: Bifunctional protein FolD (284 aa).

NADP(+) contacts are provided by residues 166 to 168 and Ile-232; that span reads GAS.

It belongs to the tetrahydrofolate dehydrogenase/cyclohydrolase family. In terms of assembly, homodimer.

The catalysed reaction is (6R)-5,10-methylene-5,6,7,8-tetrahydrofolate + NADP(+) = (6R)-5,10-methenyltetrahydrofolate + NADPH. The enzyme catalyses (6R)-5,10-methenyltetrahydrofolate + H2O = (6R)-10-formyltetrahydrofolate + H(+). Its pathway is one-carbon metabolism; tetrahydrofolate interconversion. Functionally, catalyzes the oxidation of 5,10-methylenetetrahydrofolate to 5,10-methenyltetrahydrofolate and then the hydrolysis of 5,10-methenyltetrahydrofolate to 10-formyltetrahydrofolate. The protein is Bifunctional protein FolD of Shewanella amazonensis (strain ATCC BAA-1098 / SB2B).